The following is a 100-amino-acid chain: Large ribosomal subunit protein uL23 (100 aa).

Belongs to the universal ribosomal protein uL23 family. Part of the 50S ribosomal subunit. Contacts protein L29, and trigger factor when it is bound to the ribosome.

Functionally, one of the early assembly proteins it binds 23S rRNA. One of the proteins that surrounds the polypeptide exit tunnel on the outside of the ribosome. Forms the main docking site for trigger factor binding to the ribosome. The protein is Large ribosomal subunit protein uL23 of Vibrio cholerae serotype O1 (strain ATCC 39541 / Classical Ogawa 395 / O395).